Consider the following 851-residue polypeptide: DNA mismatch repair protein MutS (851 aa).

Gly602–Ser609 provides a ligand contact to ATP.

The protein belongs to the DNA mismatch repair MutS family.

In terms of biological role, this protein is involved in the repair of mismatches in DNA. It is possible that it carries out the mismatch recognition step. This protein has a weak ATPase activity. This Streptococcus pyogenes serotype M18 (strain MGAS8232) protein is DNA mismatch repair protein MutS.